A 436-amino-acid polypeptide reads, in one-letter code: Trigger factor (436 aa).

A PPIase FKBP-type domain is found at 161 to 246 (DDQLNIDFVG…VNSVAEPKLP (86 aa)).

This sequence belongs to the FKBP-type PPIase family. Tig subfamily.

It localises to the cytoplasm. It catalyses the reaction [protein]-peptidylproline (omega=180) = [protein]-peptidylproline (omega=0). Functionally, involved in protein export. Acts as a chaperone by maintaining the newly synthesized protein in an open conformation. Functions as a peptidyl-prolyl cis-trans isomerase. The protein is Trigger factor of Pseudomonas aeruginosa (strain LESB58).